The following is a 419-amino-acid chain: Adenylosuccinate synthetase (419 aa).

GTP contacts are provided by residues 11–17 and 39–41; these read GDEGKGK and GHS. The active-site Proton acceptor is the aspartate 12. The Mg(2+) site is built by aspartate 12 and glycine 39. IMP is bound by residues 12–15, 37–40, threonine 129, arginine 143, asparagine 221, threonine 236, and arginine 296; these read DEGK and NAGH. Histidine 40 (proton donor) is an active-site residue. 292-298 contacts substrate; it reads VSTGRKR. GTP contacts are provided by residues arginine 298, 324–326, and 408–410; these read KLD and GTG.

This sequence belongs to the adenylosuccinate synthetase family. As to quaternary structure, homodimer. It depends on Mg(2+) as a cofactor.

The protein localises to the cytoplasm. It carries out the reaction IMP + L-aspartate + GTP = N(6)-(1,2-dicarboxyethyl)-AMP + GDP + phosphate + 2 H(+). It functions in the pathway purine metabolism; AMP biosynthesis via de novo pathway; AMP from IMP: step 1/2. Its function is as follows. Plays an important role in the de novo pathway and in the salvage pathway of purine nucleotide biosynthesis. Catalyzes the first committed step in the biosynthesis of AMP from IMP. This chain is Adenylosuccinate synthetase, found in Chaetomium globosum (strain ATCC 6205 / CBS 148.51 / DSM 1962 / NBRC 6347 / NRRL 1970) (Soil fungus).